Reading from the N-terminus, the 365-residue chain is Quinolone epoxide rearrangement protein asqO (365 aa).

The protein belongs to the quinolone epoxide rearrangement protein penF family.

The enzyme catalyses (1'E,3'E)-5-(3,3-dimethyloxiran-2-yl)-3-methylhexa-1,3-dienyl-quinolinone B = aspoquinolone A. It carries out the reaction (1'E,3'E)-5-(3,3-dimethyloxiran-2-yl)-3-methylhexa-1,3-dienyl-quinolinone B = aspoquinolone B. The protein operates within secondary metabolite biosynthesis. It functions in the pathway alkaloid biosynthesis. Its pathway is mycotoxin biosynthesis. Quinolone epoxide rearrangement protein; part of the gene cluster that mediates the biosynthesis of the aspoquinolone mycotoxins. Within the pathway, asqO catalyzes an enzymatic 3-exo-tet cyclization to yield the cyclopropyl-THF ring system in aspoquinolone. The first step of the pathway is catalyzed by the nonribosomal peptide synthetase asqK that condenses anthranilic acid and O-methyl-L-tyrosine to produce 4'-methoxycyclopeptin. 4'-methoxycyclopeptin is then converted to 4'-methoxydehydrocyclopeptin by the ketoglutarate-dependent dioxygenase asqJ. AsqJ also converts its first product 4'-methoxydehydrocyclopeptin to 4'-methoxycyclopenin. The following conversion of 4'-methoxycyclopenin into 4'-methoxyviridicatin is catalyzed by the cyclopenase asqI. 4'-methoxyviridicatin is the precursor of quinolone natural products, and is further converted to quinolinone B. The prenyltransferase asqH1 then catalyzes the canonical Friedel-Crafts alkylation of quinolinone B with dimethylallyl cation to yield dimethylallyl quinolone, which is subjected to FAD-dependent dehydrogenation by the FAD-linked oxidoreductase asqF to yield conjugated aryl diene. The delta(3') double bond then serves as the site of the second alkylation with DMAPP catalyzed by the prenyltransferase asqH2 to yield a carbenium ion intermediate, which can be attacked by H(2)O to yield a styrenyl quinolone containing a C3'-hydroxyprenyl chain. The FAD-dependent monooxygenase asqG performs epoxidation of the terminal C7'-C8' olefin. Finally, after dehydratation of the epoxide at C3 by asqC, the quinolone epoxide rearrangement protein asqO catalyzes an enzymatic 3-exo-tet cyclization to yield the cyclopropyl-THF ring system in aspoquinolone. The chain is Quinolone epoxide rearrangement protein asqO from Emericella nidulans (strain FGSC A4 / ATCC 38163 / CBS 112.46 / NRRL 194 / M139) (Aspergillus nidulans).